The chain runs to 533 residues: NEDD8-activating enzyme E1 regulatory subunit (533 aa).

The interval 330–343 (DMIADSDKFIKLQN) is interaction with uba3.

The protein belongs to the ubiquitin-activating E1 family. ULA1 subfamily. In terms of assembly, heterodimer of uba3 and nae1. The complex binds nedd8 and ube2m.

It functions in the pathway protein modification; protein neddylation. In terms of biological role, regulatory subunit of the dimeric uba3-nae1 E1 enzyme. E1 activates nedd8 by first adenylating its C-terminal glycine residue with ATP, thereafter linking this residue to the side chain of the catalytic cysteine, yielding a nedd8-uba3 thioester and free AMP. E1 finally transfers nedd8 to the catalytic cysteine of ube2m. The covalent attachment of nedd8 to target proteins is known as 'neddylation' and the process is involved in the regulation of cell growth, viability and development. This is NEDD8-activating enzyme E1 regulatory subunit (nae1) from Danio rerio (Zebrafish).